Consider the following 105-residue polypeptide: ATP-dependent Clp protease adapter protein ClpS (105 aa).

This sequence belongs to the ClpS family. Binds to the N-terminal domain of the chaperone ClpA.

In terms of biological role, involved in the modulation of the specificity of the ClpAP-mediated ATP-dependent protein degradation. This is ATP-dependent Clp protease adapter protein ClpS from Aeromonas salmonicida (strain A449).